Reading from the N-terminus, the 200-residue chain is Ephrin-A2 (200 aa).

Positions 1-22 are cleaved as a signal peptide; it reads MPRWEAAALLAAIVGVCVWSDD. Residues 28-161 enclose the Ephrin RBD domain; it reads SDRYAVYWNR…KLKVYVRPTN (134 aa). N-linked (GlcNAc...) asparagine glycosylation occurs at asparagine 36. 2 disulfides stabilise this stretch: cysteine 61–cysteine 101 and cysteine 89–cysteine 150. Residues asparagine 161 and asparagine 175 are each glycosylated (N-linked (GlcNAc...) asparagine). A lipid anchor (GPI-anchor amidated asparagine) is attached at asparagine 175. A propeptide spans 176 to 200 (removed in mature form); it reads NSCCSLAVPRAVLVAAPVFWTLLGS.

Belongs to the ephrin family. As to quaternary structure, binds to the receptor tyrosine kinases EPHA3, EPHA4 and EPHA5. Interacts with EPHA8; activates EPHA8. Expressed in a gradient across the tectum being more strongly expressed at the posterior pole.

The protein localises to the cell membrane. Its function is as follows. Cell surface GPI-bound ligand for Eph receptors, a family of receptor tyrosine kinases which are crucial for migration, repulsion and adhesion during neuronal, vascular and epithelial development. Binds promiscuously Eph receptors residing on adjacent cells, leading to contact-dependent bidirectional signaling into neighboring cells. The signaling pathway downstream of the receptor is referred to as forward signaling while the signaling pathway downstream of the ephrin ligand is referred to as reverse signaling. With the EPHA2 receptor may play a role in bone remodeling through regulation of osteoclastogenesis and osteoblastogenesis. The protein is Ephrin-A2 (EFNA2) of Gallus gallus (Chicken).